The sequence spans 301 residues: UDP-N-acetylenolpyruvoylglucosamine reductase (301 aa).

Positions 30-194 (VGGEADYLVF…LSVKFALAPG (165 aa)) constitute an FAD-binding PCMH-type domain. The active site involves Arg-173. Catalysis depends on Ser-223, which acts as the Proton donor. The active site involves Glu-293.

It belongs to the MurB family. It depends on FAD as a cofactor.

The protein localises to the cytoplasm. It catalyses the reaction UDP-N-acetyl-alpha-D-muramate + NADP(+) = UDP-N-acetyl-3-O-(1-carboxyvinyl)-alpha-D-glucosamine + NADPH + H(+). It participates in cell wall biogenesis; peptidoglycan biosynthesis. Its function is as follows. Cell wall formation. This is UDP-N-acetylenolpyruvoylglucosamine reductase from Streptococcus pneumoniae (strain 70585).